The sequence spans 347 residues: Dihydroorotase (347 aa).

Zn(2+) contacts are provided by histidine 17 and histidine 19. Substrate-binding positions include 19–21 (HVR) and asparagine 45. The Zn(2+) site is built by lysine 102, histidine 139, and histidine 177. The residue at position 102 (lysine 102) is an N6-carboxylysine. Histidine 139 provides a ligand contact to substrate. Leucine 222 is a substrate binding site. Position 250 (aspartate 250) interacts with Zn(2+). Aspartate 250 is a catalytic residue. The substrate site is built by histidine 254 and alanine 266.

It belongs to the metallo-dependent hydrolases superfamily. DHOase family. Class II DHOase subfamily. In terms of assembly, homodimer. The cofactor is Zn(2+).

It catalyses the reaction (S)-dihydroorotate + H2O = N-carbamoyl-L-aspartate + H(+). The protein operates within pyrimidine metabolism; UMP biosynthesis via de novo pathway; (S)-dihydroorotate from bicarbonate: step 3/3. Its function is as follows. Catalyzes the reversible cyclization of carbamoyl aspartate to dihydroorotate. The chain is Dihydroorotase from Acidovorax sp. (strain JS42).